Reading from the N-terminus, the 305-residue chain is GMP synthase [glutamine-hydrolyzing] subunit B (305 aa).

Residues 2–184 (VKPEKFIPKA…LKLPDEICER (183 aa)) enclose the GMPS ATP-PPase domain. Residue 29–35 (SGGVDSS) participates in ATP binding.

As to quaternary structure, heterodimer composed of a glutamine amidotransferase subunit (A) and a GMP-binding subunit (B).

It carries out the reaction XMP + L-glutamine + ATP + H2O = GMP + L-glutamate + AMP + diphosphate + 2 H(+). It participates in purine metabolism; GMP biosynthesis; GMP from XMP (L-Gln route): step 1/1. Catalyzes the synthesis of GMP from XMP. The protein is GMP synthase [glutamine-hydrolyzing] subunit B of Methanosarcina barkeri (strain Fusaro / DSM 804).